We begin with the raw amino-acid sequence, 142 residues long: Cell division protein SepF (142 aa).

It belongs to the SepF family. Homodimer. Interacts with FtsZ.

It localises to the cytoplasm. Functionally, cell division protein that is part of the divisome complex and is recruited early to the Z-ring. Probably stimulates Z-ring formation, perhaps through the cross-linking of FtsZ protofilaments. Its function overlaps with FtsA. This chain is Cell division protein SepF, found in Syntrophomonas wolfei subsp. wolfei (strain DSM 2245B / Goettingen).